The sequence spans 614 residues: Putative Na(+)/H(+) antiporter YjbQ (614 aa).

13 helical membrane passes run 3–23 (HTSV…PILL), 32–52 (VVVA…NLVV), 57–77 (WLQT…GLEI), 107–127 (IFVG…LAGF), 130–150 (NAFL…VPTL), 163–183 (IILL…AVFS), 193–213 (MWLL…GRVF), 225–244 (GTIQ…LVAL), 248–267 (LGAE…SLLS), 282–302 (GFLI…WTLF), 307–327 (ILIM…IPVM), 338–358 (IFAS…AATI), and 368–388 (NMSG…PICF). An RCK N-terminal domain is found at 401-519 (KKTITFIGAN…EQGISIFSIL (119 aa)). Residues 533 to 614 (PGVMKLLTNQ…VTDLKKTLEG (82 aa)) enclose the RCK C-terminal domain.

Belongs to the monovalent cation:proton antiporter 2 (CPA2) transporter (TC 2.A.37) family.

It localises to the cell membrane. With respect to regulation, binds cyclic di-AMP (c-di-AMP), which may regulate the transporter activity. Its function is as follows. Probable Na(+)/H(+) antiporter. This Bacillus subtilis (strain 168) protein is Putative Na(+)/H(+) antiporter YjbQ.